A 176-amino-acid polypeptide reads, in one-letter code: Crossover junction endodeoxyribonuclease RuvC (176 aa).

Catalysis depends on residues aspartate 12, glutamate 72, and aspartate 144. The Mg(2+) site is built by aspartate 12, glutamate 72, and aspartate 144.

It belongs to the RuvC family. As to quaternary structure, homodimer which binds Holliday junction (HJ) DNA. The HJ becomes 2-fold symmetrical on binding to RuvC with unstacked arms; it has a different conformation from HJ DNA in complex with RuvA. In the full resolvosome a probable DNA-RuvA(4)-RuvB(12)-RuvC(2) complex forms which resolves the HJ. Mg(2+) is required as a cofactor.

Its subcellular location is the cytoplasm. It carries out the reaction Endonucleolytic cleavage at a junction such as a reciprocal single-stranded crossover between two homologous DNA duplexes (Holliday junction).. Functionally, the RuvA-RuvB-RuvC complex processes Holliday junction (HJ) DNA during genetic recombination and DNA repair. Endonuclease that resolves HJ intermediates. Cleaves cruciform DNA by making single-stranded nicks across the HJ at symmetrical positions within the homologous arms, yielding a 5'-phosphate and a 3'-hydroxyl group; requires a central core of homology in the junction. The consensus cleavage sequence is 5'-(A/T)TT(C/G)-3'. Cleavage occurs on the 3'-side of the TT dinucleotide at the point of strand exchange. HJ branch migration catalyzed by RuvA-RuvB allows RuvC to scan DNA until it finds its consensus sequence, where it cleaves and resolves the cruciform DNA. The polypeptide is Crossover junction endodeoxyribonuclease RuvC (Methylocella silvestris (strain DSM 15510 / CIP 108128 / LMG 27833 / NCIMB 13906 / BL2)).